A 388-amino-acid polypeptide reads, in one-letter code: STE20-related kinase adapter protein strd-1 (388 aa).

The Protein kinase domain occupies 52–335 (YDCVRYMGTC…ASDLKSSAWL (284 aa)). ATP-binding positions include 58–66 (MGTCNGGQI) and Lys-82.

It belongs to the protein kinase superfamily. STE Ser/Thr protein kinase family. STE20 subfamily. As to quaternary structure, interacts with sad-1. Interacts with par-4. As to expression, expressed in nervous system, pharynx and excretory canal. Expressed in germline.

The protein localises to the perikaryon. It localises to the nucleus. It is found in the cell projection. The protein resides in the dendrite. Its subcellular location is the axon. The protein localises to the synapse. It localises to the cytoplasm. It is found in the cell cortex. Its function is as follows. Pseudokinase which may act as an adapter for kinases sad-1 and par-4 and thereby is involved in several developmental processes. Regulates cell-autonomously both neuronal polarity and synaptic organization when bound to sad-1. Required for sad-1 localization to synapses. Required to establish germline stem cell (GSC) quiescence during dauer development, to promote cell shedding during embryogenesis and to control asymmetric cell division of the Q.p neuroblast lineage, probably when bound to par-4. May be involved in maintaining the integrity of the early embryonic cortex when bound to par-4. The polypeptide is STE20-related kinase adapter protein strd-1 (Caenorhabditis elegans).